A 462-amino-acid polypeptide reads, in one-letter code: MTEFDTIAAISTPMGEGAIAIVRLSGDQAVEIADRLFRSPSGKRLKDVPSHTIHYGHIIDPKSGRVVEEVMVSVMRAPKTFTREDVVEINCHGGFVSVNRVLQLVLANGARLAEPGEFTKRAFLNGRIDLSQAEAVIDLIRAKTDRAMNVALQQMEGRLSKLIRELRQTILETLAHVEVNIDYPEYDDVEEMTPRLLREKAEYVRGQIEKLLSTAAQGKILREGLATVIIGRPNVGKSSLLNALAHENRAIVTDIPGTTRDVIEEYVNVRGVPLRLIDTAGIRETEDVVERIGVERSQQMLKRADLILLVLNYHEPLTEEDERLFAMIEGMDAIVIVNKTDLPRRIDMERVKELAAGRPVVGTSLLHEQGIDELEKAIADLFFGGELEAGDLTYVSNSRHIALLEQAKTAIEDALAGIDAGMPVDLVQIDLRRAWELLGEIIGDTVHESLIDQLFAQFCLGK.

(6S)-5-formyl-5,6,7,8-tetrahydrofolate contacts are provided by R23, E88, and R127. The TrmE-type G domain maps to 224–383 (GLATVIIGRP…LEKAIADLFF (160 aa)). N234 is a K(+) binding site. Residues 234 to 239 (NVGKSS), 253 to 259 (TDIPGTT), and 278 to 281 (DTAG) contribute to the GTP site. Residue S238 participates in Mg(2+) binding. The K(+) site is built by T253, I255, and T258. Residue T259 participates in Mg(2+) binding. K462 provides a ligand contact to (6S)-5-formyl-5,6,7,8-tetrahydrofolate.

The protein belongs to the TRAFAC class TrmE-Era-EngA-EngB-Septin-like GTPase superfamily. TrmE GTPase family. In terms of assembly, homodimer. Heterotetramer of two MnmE and two MnmG subunits. It depends on K(+) as a cofactor.

Its subcellular location is the cytoplasm. Its function is as follows. Exhibits a very high intrinsic GTPase hydrolysis rate. Involved in the addition of a carboxymethylaminomethyl (cmnm) group at the wobble position (U34) of certain tRNAs, forming tRNA-cmnm(5)s(2)U34. The chain is tRNA modification GTPase MnmE from Geobacillus kaustophilus (strain HTA426).